We begin with the raw amino-acid sequence, 284 residues long: Signal peptidase I (284 aa).

The chain crosses the membrane as a helical span at residues 4-22; the sequence is NFPLLLVIAVAVCGALALV. Topologically, residues 23-58 are cytoplasmic; the sequence is DLVLFAPRRRAAISSYEGQVNEPDPAVLEKLNKEPL. Residues 59 to 77 traverse the membrane as a helical segment; sequence LVEYGKSFFPVLFIVLVLR. At 78–284 the chain is on the periplasmic side; sequence SFLVEPFQIP…PNFSRVGVIH (207 aa). Active-site residues include Ser90 and Lys145.

It belongs to the peptidase S26 family.

The protein localises to the cell inner membrane. It catalyses the reaction Cleavage of hydrophobic, N-terminal signal or leader sequences from secreted and periplasmic proteins.. This chain is Signal peptidase I (lepB), found in Pseudomonas aeruginosa (strain ATCC 15692 / DSM 22644 / CIP 104116 / JCM 14847 / LMG 12228 / 1C / PRS 101 / PAO1).